The chain runs to 38 residues: MKNTNPNSQPVELNRTSLFLGRLLIFVLGILFSSYIFN.

The helical transmembrane segment at 17 to 37 (SLFLGRLLIFVLGILFSSYIF) threads the bilayer.

The protein belongs to the PsbL family. In terms of assembly, PSII is composed of 1 copy each of membrane proteins PsbA, PsbB, PsbC, PsbD, PsbE, PsbF, PsbH, PsbI, PsbJ, PsbK, PsbL, PsbM, PsbT, PsbX, PsbY, PsbZ, Psb30/Ycf12, peripheral proteins PsbO, CyanoQ (PsbQ), PsbU, PsbV and a large number of cofactors. It forms dimeric complexes.

It is found in the cellular thylakoid membrane. In terms of biological role, one of the components of the core complex of photosystem II (PSII). PSII is a light-driven water:plastoquinone oxidoreductase that uses light energy to abstract electrons from H(2)O, generating O(2) and a proton gradient subsequently used for ATP formation. It consists of a core antenna complex that captures photons, and an electron transfer chain that converts photonic excitation into a charge separation. This subunit is found at the monomer-monomer interface and is required for correct PSII assembly and/or dimerization. The chain is Photosystem II reaction center protein L from Prochlorothrix hollandica.